The chain runs to 158 residues: Curculin-2 (158 aa).

The signal sequence occupies residues 1-22 (MAAKFLLTILVTFAAVASLGMA). The Bulb-type lectin domain maps to 23-131 (DSVLLSGQTL…VLWPLGLNGC (109 aa)). Cysteine 51 and cysteine 74 are disulfide-bonded. Asparagine 103 carries N-linked (GlcNAc...) asparagine glycosylation. A propeptide spanning residues 136–158 (GEITVAKDSTEPQHEDIKMVINN) is cleaved from the precursor.

In terms of assembly, heterodimer with curculin-1; Disulfide-linked.

Taste-modifying protein; sweet-tasting. After curculin, water elicits a sweet taste, and sour substances induce a stronger sense of sweetness. The sequence is that of Curculin-2 from Molineria latifolia (Lumbah).